The primary structure comprises 309 residues: Ribonuclease Z (309 aa).

Zn(2+) is bound by residues His-63, His-65, Asp-67, His-68, His-145, Asp-216, and His-274. Residue Asp-67 is the Proton acceptor of the active site.

This sequence belongs to the RNase Z family. As to quaternary structure, homodimer. Zn(2+) serves as cofactor.

The enzyme catalyses Endonucleolytic cleavage of RNA, removing extra 3' nucleotides from tRNA precursor, generating 3' termini of tRNAs. A 3'-hydroxy group is left at the tRNA terminus and a 5'-phosphoryl group is left at the trailer molecule.. In terms of biological role, zinc phosphodiesterase, which displays some tRNA 3'-processing endonuclease activity. Probably involved in tRNA maturation, by removing a 3'-trailer from precursor tRNA. The sequence is that of Ribonuclease Z from Streptococcus pneumoniae serotype 2 (strain D39 / NCTC 7466).